Consider the following 202-residue polypeptide: Imidazoleglycerol-phosphate dehydratase (202 aa).

Belongs to the imidazoleglycerol-phosphate dehydratase family.

The protein resides in the cytoplasm. The catalysed reaction is D-erythro-1-(imidazol-4-yl)glycerol 3-phosphate = 3-(imidazol-4-yl)-2-oxopropyl phosphate + H2O. The protein operates within amino-acid biosynthesis; L-histidine biosynthesis; L-histidine from 5-phospho-alpha-D-ribose 1-diphosphate: step 6/9. This Parasynechococcus marenigrum (strain WH8102) protein is Imidazoleglycerol-phosphate dehydratase.